We begin with the raw amino-acid sequence, 153 residues long: Large ribosomal subunit protein uL15 (153 aa).

The interval 1 to 47 is disordered; the sequence is MRLHELSPAPGSRKDRKRVGRGDAGRGNYSGRGMKGQKARSGGATRP.

This sequence belongs to the universal ribosomal protein uL15 family. Part of the 50S ribosomal subunit.

Functionally, binds to the 23S rRNA. This Dehalococcoides mccartyi (strain ATCC BAA-2100 / JCM 16839 / KCTC 5957 / BAV1) protein is Large ribosomal subunit protein uL15.